The following is a 78-amino-acid chain: Exodeoxyribonuclease 7 small subunit (78 aa).

The protein belongs to the XseB family. In terms of assembly, heterooligomer composed of large and small subunits.

It localises to the cytoplasm. The enzyme catalyses Exonucleolytic cleavage in either 5'- to 3'- or 3'- to 5'-direction to yield nucleoside 5'-phosphates.. In terms of biological role, bidirectionally degrades single-stranded DNA into large acid-insoluble oligonucleotides, which are then degraded further into small acid-soluble oligonucleotides. The polypeptide is Exodeoxyribonuclease 7 small subunit (Finegoldia magna (strain ATCC 29328 / DSM 20472 / WAL 2508) (Peptostreptococcus magnus)).